The sequence spans 398 residues: NADH-quinone oxidoreductase subunit D (398 aa).

This sequence belongs to the complex I 49 kDa subunit family. NDH-1 is composed of 14 different subunits. Subunits NuoB, C, D, E, F, and G constitute the peripheral sector of the complex.

Its subcellular location is the cell inner membrane. It catalyses the reaction a quinone + NADH + 5 H(+)(in) = a quinol + NAD(+) + 4 H(+)(out). In terms of biological role, NDH-1 shuttles electrons from NADH, via FMN and iron-sulfur (Fe-S) centers, to quinones in the respiratory chain. The immediate electron acceptor for the enzyme in this species is believed to be ubiquinone. Couples the redox reaction to proton translocation (for every two electrons transferred, four hydrogen ions are translocated across the cytoplasmic membrane), and thus conserves the redox energy in a proton gradient. This is NADH-quinone oxidoreductase subunit D from Rhodospirillum centenum (strain ATCC 51521 / SW).